Here is a 121-residue protein sequence, read N- to C-terminus: Large ribosomal subunit protein uL14 (121 aa).

The protein belongs to the universal ribosomal protein uL14 family. In terms of assembly, part of the 50S ribosomal subunit. Forms a cluster with proteins L3 and L19. In the 70S ribosome, L14 and L19 interact and together make contacts with the 16S rRNA in bridges B5 and B8.

Functionally, binds to 23S rRNA. Forms part of two intersubunit bridges in the 70S ribosome. This chain is Large ribosomal subunit protein uL14, found in Prochlorococcus marinus (strain MIT 9211).